We begin with the raw amino-acid sequence, 175 residues long: Sec-independent protein translocase protein TatB (175 aa).

Residues 1 to 21 (MLDLGLSKMALIGVVALVVLG) form a helical membrane-spanning segment. Over residues 99 to 115 (GDPAAADASGGLGATSD) the composition is skewed to low complexity. The tract at residues 99-118 (GDPAAADASGGLGATSDEPS) is disordered.

The protein belongs to the TatB family. The Tat system comprises two distinct complexes: a TatABC complex, containing multiple copies of TatA, TatB and TatC subunits, and a separate TatA complex, containing only TatA subunits. Substrates initially bind to the TatABC complex, which probably triggers association of the separate TatA complex to form the active translocon.

The protein resides in the cell inner membrane. Functionally, part of the twin-arginine translocation (Tat) system that transports large folded proteins containing a characteristic twin-arginine motif in their signal peptide across membranes. Together with TatC, TatB is part of a receptor directly interacting with Tat signal peptides. TatB may form an oligomeric binding site that transiently accommodates folded Tat precursor proteins before their translocation. The chain is Sec-independent protein translocase protein TatB from Burkholderia thailandensis (strain ATCC 700388 / DSM 13276 / CCUG 48851 / CIP 106301 / E264).